We begin with the raw amino-acid sequence, 203 residues long: AFG2-interacting ribosome maturation factor (203 aa).

As to quaternary structure, part of the 55LCC heterohexameric ATPase complex composed at least of AIRIM, AFG2A, AFG2B and CINP. Does not associate with pre-60S ribosomal particles. Phosphorylated on serines by CK2 kinase.

It localises to the nucleus. The protein localises to the cytoplasm. In terms of biological role, part of the 55LCC heterohexameric ATPase complex which is chromatin-associated and promotes replisome proteostasis to maintain replication fork progression and genome stability. Required for replication fork progression, sister chromatid cohesion, and chromosome stability. The ATPase activity is specifically enhanced by replication fork DNA and is coupled to cysteine protease-dependent cleavage of replisome substrates in response to replication fork damage. Uses ATPase activity to process replisome substrates in S-phase, facilitating their proteolytic turnover from chromatin to ensure DNA replication and mitotic fidelity. Involved in the cytoplasmic maturation steps of pre-60S ribosomal particles by promoting the release of shuttling protein RSL24D1/RLP24 from the pre-ribosomal particles. The protein is AFG2-interacting ribosome maturation factor of Homo sapiens (Human).